A 287-amino-acid polypeptide reads, in one-letter code: Elongation factor Ts (287 aa).

Positions 80–83 (TDFL) are involved in Mg(2+) ion dislocation from EF-Tu.

Belongs to the EF-Ts family.

It localises to the cytoplasm. Associates with the EF-Tu.GDP complex and induces the exchange of GDP to GTP. It remains bound to the aminoacyl-tRNA.EF-Tu.GTP complex up to the GTP hydrolysis stage on the ribosome. This is Elongation factor Ts from Pseudomonas putida (strain GB-1).